We begin with the raw amino-acid sequence, 322 residues long: tRNA N6-adenosine threonylcarbamoyltransferase (322 aa).

Fe cation-binding residues include His109 and His113. Substrate-binding positions include 131-135 (LISGG), Asp164, Gly177, Asp181, and Asn277. Asp303 provides a ligand contact to Fe cation.

This sequence belongs to the KAE1 / TsaD family. Fe(2+) is required as a cofactor.

Its subcellular location is the cytoplasm. It carries out the reaction L-threonylcarbamoyladenylate + adenosine(37) in tRNA = N(6)-L-threonylcarbamoyladenosine(37) in tRNA + AMP + H(+). Functionally, required for the formation of a threonylcarbamoyl group on adenosine at position 37 (t(6)A37) in tRNAs that read codons beginning with adenine. Is involved in the transfer of the threonylcarbamoyl moiety of threonylcarbamoyl-AMP (TC-AMP) to the N6 group of A37, together with TsaE and TsaB. TsaD likely plays a direct catalytic role in this reaction. The protein is tRNA N6-adenosine threonylcarbamoyltransferase of Mesomycoplasma hyopneumoniae (strain 232) (Mycoplasma hyopneumoniae).